Here is a 267-residue protein sequence, read N- to C-terminus: Hydroxypyruvate/pyruvate aldolase Bphyt_5830 (267 aa).

The active-site Proton acceptor is the His48. Glu152 and Asp178 together coordinate a divalent metal cation.

The protein belongs to the HpcH/HpaI aldolase family. A divalent metal cation is required as a cofactor.

It catalyses the reaction D-glyceraldehyde + 3-hydroxypyruvate = 2-dehydro-D-galactonate. It carries out the reaction D-glyceraldehyde + 3-hydroxypyruvate = (3R,4S,5R)-3,4,5,6-tetrahydroxy-2-oxohexanoate. The enzyme catalyses D-glyceraldehyde + pyruvate = 2-dehydro-3-deoxy-L-galactonate. Functionally, aldolase which can catalyze in vitro the aldolisation reaction between hydroxypyruvate (HPA) or pyruvate (PA) and D-glyceraldehyde (D-GA). The condensation of hydroxypyruvate and D-glyceraldehyde produces 2-dehydro-D-galactonate as the major product and (3R,4S,5R)-3,4,5,6-tetrahydroxy-2-oxohexanoate. The condensation of pyruvate and D-glyceraldehyde produces 2-dehydro-3-deoxy-L-galactonate. The chain is Hydroxypyruvate/pyruvate aldolase Bphyt_5830 from Paraburkholderia phytofirmans (strain DSM 17436 / LMG 22146 / PsJN) (Burkholderia phytofirmans).